The following is a 220-amino-acid chain: Protein DGCR6 (220 aa).

Positions 76–142 form a coiled coil; it reads KSLYNQRLRL…EQRAMDQKIV (67 aa).

The protein belongs to the gonadal family. As to expression, found in all tissues examined with highest expression in liver, heart and skeletal muscle. Lower levels in pancreas and placenta. Weak expression in brain.

It is found in the nucleus. Its function is as follows. May play a role in neural crest cell migration into the third and fourth pharyngeal pouches. This chain is Protein DGCR6 (DGCR6), found in Homo sapiens (Human).